The primary structure comprises 345 residues: tRNA N6-adenosine threonylcarbamoyltransferase (345 aa).

Fe cation-binding residues include His111 and His115. Residues 134–138, Asp167, Gly180, and Asn276 contribute to the substrate site; that span reads LVSGG. Residue Asp304 participates in Fe cation binding.

The protein belongs to the KAE1 / TsaD family. It depends on Fe(2+) as a cofactor.

Its subcellular location is the cytoplasm. The catalysed reaction is L-threonylcarbamoyladenylate + adenosine(37) in tRNA = N(6)-L-threonylcarbamoyladenosine(37) in tRNA + AMP + H(+). In terms of biological role, required for the formation of a threonylcarbamoyl group on adenosine at position 37 (t(6)A37) in tRNAs that read codons beginning with adenine. Is involved in the transfer of the threonylcarbamoyl moiety of threonylcarbamoyl-AMP (TC-AMP) to the N6 group of A37, together with TsaE and TsaB. TsaD likely plays a direct catalytic role in this reaction. The sequence is that of tRNA N6-adenosine threonylcarbamoyltransferase from Bordetella avium (strain 197N).